The primary structure comprises 791 residues: RAS guanyl-releasing protein 1 (791 aa).

The N-terminal Ras-GEF domain maps to 49–172 (LGKLSKGASL…RLIDTAQINS (124 aa)). The interval 53 to 106 (SKGASLDDLIQMCIQAFDLDGNMGQNSELLQIMLTMHGFLLPSTELLMKLRTLY) is ras exchanger motif region; required for transforming activity. One can recognise a Ras-GEF domain in the interval 201 to 432 (EPQELAEHLT…YELSYAREPR (232 aa)). EF-hand domains lie at 466-501 (HVQRMVDSVFKNYDLDQDGYISQEEFEKIAASFPFS) and 502-528 (FCVMDKDREGLISRQEITAYFMRASSI). Residues D479, D481, D483, Y485, E490, D506, D508, E510, and E517 each coordinate Ca(2+). The Phorbol-ester/DAG-type zinc-finger motif lies at 537–587 (LHNFQETTYLRPTFCDNCAGFLWGVIKQGYRCKDCGMNCHKQCKELVVFEC). Positions 683-695 (QVPSPQRSRTPGL) are enriched in polar residues. Positions 683–715 (QVPSPQRSRTPGLTSHLPISPMPSPCPSPVPTR) are disordered. Residues 702-712 (SPMPSPCPSPV) are compositionally biased toward pro residues. Residues 728-785 (IRKARAELRGGKAGIQELEKEKALLKEENTTLKIQLKDAQRRVETLRAELRKYVLDSD) are a coiled coil.

The protein belongs to the RASGRP family.

It localises to the cytoplasm. It is found in the cytosol. The protein localises to the cell membrane. The protein resides in the golgi apparatus membrane. Its subcellular location is the endoplasmic reticulum membrane. With respect to regulation, regulated by F-actin polymerization and probably by calcium. In terms of biological role, functions as a diacylglycerol (DAG)-regulated nucleotide exchange factor specifically activating Ras through the exchange of bound GDP for GTP. The protein is RAS guanyl-releasing protein 1 (rasgrp1) of Xenopus tropicalis (Western clawed frog).